We begin with the raw amino-acid sequence, 225 residues long: MDLRAGDSWGMLACLCTVLWHLPAVPALNRTGDPGPGPSIQKTYDLTRYLEHQLRSLAGTYLNYLGPPFNEPDFNPPRLGAETLPRATVNLEVWRSLNDRLRLTQNYEAYSHLLCYLRGLNRQAATAELRRSLAHFCTSLQGLLGSIAGVMATLGYPLPQPLPGTEPAWAPGPAHSDFLQKMDDFWLLKELQTWLWRSAKDFNRLKKKMQPPAASVTLHLEAHGF.

Residues 1-27 (MDLRAGDSWGMLACLCTVLWHLPAVPA) form the signal peptide. Residue N29 is glycosylated (N-linked (GlcNAc...) asparagine).

It belongs to the IL-6 superfamily. Forms a heteromeric complex with cardiotrophin-like cytokine CRLF1/CLF-1; the CRLF1-CLCF1 complex is a ligand for the ciliary neurotrophic factor receptor/CNTFR. The CRLF1-CLCF1 heterodimer binds SORL1 (via N-terminal ectodomain); within this complex, the interaction is mediated predominantly by the CRLF1 moiety. The tripartite signaling complex formed by CRLF1, CLCF1 and CNTFR also binds SORL1.

It localises to the secreted. In terms of biological role, in complex with CRLF1, forms a heterodimeric neurotropic cytokine that plays a crucial role during neuronal development. Also stimulates B-cells. Binds to and activates the ILST/gp130 receptor. In Mus musculus (Mouse), this protein is Cardiotrophin-like cytokine factor 1 (Clcf1).